Reading from the N-terminus, the 793-residue chain is Kinesin-like protein KIN-14C (793 aa).

A disordered region spans residues 1–43; that stretch reads MASRNQNRPPRSPNAKKEGLGGISFDKRRKVETQGGTGRRQAF. Residues 1–69 are globular; the sequence is MASRNQNRPP…IEECGKVDFT (69 aa). The segment covering 15-32 has biased composition (basic and acidic residues); the sequence is AKKEGLGGISFDKRRKVE. Positions 120-375 form a coiled coil; it reads KENLKVSLES…EQQLAIANER (256 aa). Residues 431–772 enclose the Kinesin motor domain; that stretch reads NIRVFCRVRP…LRFAARVNAC (342 aa). 516–523 is an ATP binding site; sequence GQTGSGKT.

It belongs to the TRAFAC class myosin-kinesin ATPase superfamily. Kinesin family. KIN-14 subfamily.

It is found in the cytoplasm. The protein localises to the cytoskeleton. It localises to the spindle. The protein resides in the phragmoplast. Its subcellular location is the chromosome. It is found in the centromere. The protein localises to the kinetochore. Kinesin that supports microtubule movement in an ATP-dependent manner and has a minus-end directed polarity. Plays a crucial role in spindle morphogenesis in male meiosis. In mitosis, is required for normal microtubule accumulation at the spindle poles during prophase and may play a role in spindle assembly during prometaphase. This chain is Kinesin-like protein KIN-14C, found in Arabidopsis thaliana (Mouse-ear cress).